The chain runs to 281 residues: Phosphatidylglycerol--prolipoprotein diacylglyceryl transferase (281 aa).

4 helical membrane passes run Val-23–Trp-43, Phe-71–Tyr-91, Trp-107–Phe-127, and Ile-133–Val-153. Arg-154 provides a ligand contact to a 1,2-diacyl-sn-glycero-3-phospho-(1'-sn-glycerol). The next 3 membrane-spanning stretches (helical) occupy residues Leu-189–Val-209, Gly-217–Phe-237, and Leu-247–Leu-267.

This sequence belongs to the Lgt family.

It localises to the cell inner membrane. The catalysed reaction is L-cysteinyl-[prolipoprotein] + a 1,2-diacyl-sn-glycero-3-phospho-(1'-sn-glycerol) = an S-1,2-diacyl-sn-glyceryl-L-cysteinyl-[prolipoprotein] + sn-glycerol 1-phosphate + H(+). It participates in protein modification; lipoprotein biosynthesis (diacylglyceryl transfer). In terms of biological role, catalyzes the transfer of the diacylglyceryl group from phosphatidylglycerol to the sulfhydryl group of the N-terminal cysteine of a prolipoprotein, the first step in the formation of mature lipoproteins. The sequence is that of Phosphatidylglycerol--prolipoprotein diacylglyceryl transferase from Brucella anthropi (strain ATCC 49188 / DSM 6882 / CCUG 24695 / JCM 21032 / LMG 3331 / NBRC 15819 / NCTC 12168 / Alc 37) (Ochrobactrum anthropi).